The chain runs to 212 residues: RNA chaperone ProQ (212 aa).

The interval glutamine 107–valine 153 is disordered. Low complexity predominate over residues glutamine 117 to lysine 126. Residues threonine 127 to lysine 141 show a composition bias toward basic residues.

This sequence belongs to the ProQ family.

Its subcellular location is the cytoplasm. RNA chaperone with significant RNA binding, RNA strand exchange and RNA duplexing activities. The polypeptide is RNA chaperone ProQ (Shewanella halifaxensis (strain HAW-EB4)).